The following is a 500-amino-acid chain: Glucosylglycerol-phosphate synthase (500 aa).

It belongs to the glycosyltransferase 20 family.

It catalyses the reaction ADP-alpha-D-glucose + sn-glycerol 3-phosphate = 2-O-(alpha-D-glucopyranosyl)-sn-glycerol 3-phosphate + ADP + H(+). The protein operates within glycan metabolism; glucosylglycerol biosynthesis. Involved in salt tolerance by producing GG-phosphate from ADP-glucose and glycerol-3-phosphate (G3P), an intermediate in the synthesis of the osmolyte glucosylglycerol (GG). The sequence is that of Glucosylglycerol-phosphate synthase (ggpS) from Picosynechococcus sp. (strain ATCC 27264 / PCC 7002 / PR-6) (Agmenellum quadruplicatum).